Reading from the N-terminus, the 705-residue chain is Effector protein AvrPphDPsv (705 aa).

The segment covering 1–15 has biased composition (polar residues); sequence MNPLQSIQHNITTPP. Disordered stretches follow at residues 1-40 and 175-205; these read MNPLQSIQHNITTPPISGGQPLDAVGPQAQKSHPKRISPS and RLETSLLSSPDHSRPPSQPKPVHLGSVRRES.

It localises to the secreted. Its function is as follows. Effector protein involved in non-host recognition. The polypeptide is Effector protein AvrPphDPsv (avrPphDPsv) (Pseudomonas savastanoi (Pseudomonas syringae pv. savastanoi)).